The sequence spans 500 residues: Glutamyl-tRNA(Gln) amidotransferase subunit A (500 aa).

Catalysis depends on charge relay system residues lysine 81 and serine 161. Serine 185 functions as the Acyl-ester intermediate in the catalytic mechanism.

The protein belongs to the amidase family. GatA subfamily. Heterotrimer of A, B and C subunits.

It catalyses the reaction L-glutamyl-tRNA(Gln) + L-glutamine + ATP + H2O = L-glutaminyl-tRNA(Gln) + L-glutamate + ADP + phosphate + H(+). Functionally, allows the formation of correctly charged Gln-tRNA(Gln) through the transamidation of misacylated Glu-tRNA(Gln) in organisms which lack glutaminyl-tRNA synthetase. The reaction takes place in the presence of glutamine and ATP through an activated gamma-phospho-Glu-tRNA(Gln). The sequence is that of Glutamyl-tRNA(Gln) amidotransferase subunit A from Rhodospirillum rubrum (strain ATCC 11170 / ATH 1.1.1 / DSM 467 / LMG 4362 / NCIMB 8255 / S1).